We begin with the raw amino-acid sequence, 372 residues long: 3-galactosyl-N-acetylglucosaminide 4-alpha-L-fucosyltransferase FUT3 (372 aa).

At 1 to 15 (MDPLGAAKPQWPWRR) the chain is on the cytoplasmic side. Residues 16–34 (CLAALLFQLLVAVCFFSYL) form a helical; Signal-anchor for type II membrane protein membrane-spanning segment. Residues 35–372 (RVSRDDATGS…TMRSIAAWFT (338 aa)) are Lumenal-facing. A disordered region spans residues 40–69 (DATGSPRPGLMAVEPVTGAPSGSSRQDTTP). Residues Asn165 and Asn196 are each glycosylated (N-linked (GlcNAc...) asparagine).

This sequence belongs to the glycosyltransferase 10 family. In terms of processing, glycosylated.

The protein resides in the golgi apparatus. It localises to the golgi stack membrane. It carries out the reaction a beta-D-galactosyl-(1-&gt;3)-N-acetyl-beta-D-glucosaminyl derivative + GDP-beta-L-fucose = a beta-D-galactosyl-(1-&gt;3)-[alpha-L-fucosyl-(1-&gt;4)]-N-acetyl-beta-D-glucosaminyl derivative + GDP + H(+). The enzyme catalyses an N-acetyl-alpha-neuraminyl-(2-&gt;3)-beta-D-galactosyl-(1-&gt;4)-N-acetyl-beta-D-glucosaminyl derivative + GDP-beta-L-fucose = an alpha-Neu5Ac-(2-&gt;3)-beta-D-Gal-(1-&gt;4)-[alpha-L-Fuc-(1-&gt;3)]-beta-D-GlcNAc derivative + GDP + H(+). It catalyses the reaction a beta-D-galactosyl-(1-&gt;4)-N-acetyl-beta-D-glucosaminyl derivative + GDP-beta-L-fucose = a beta-D-galactosyl-(1-&gt;4)-[alpha-L-fucosyl-(1-&gt;3)]-N-acetyl-beta-D-glucosaminyl derivative + GDP + H(+). The catalysed reaction is an alpha-Neu5Ac-(2-&gt;3)-beta-D-Gal-(1-&gt;4)-beta-D-GlcNAc-(1-&gt;3)-beta-D-Gal-(1-&gt;4)-[alpha-L-Fuc-(1-&gt;3)]-beta-D-GlcNAc derivative + GDP-beta-L-fucose = an alpha-Neu5Ac-(2-&gt;3)-beta-D-Gal-(1-&gt;4)-[alpha-L-Fuc-(1-&gt;3)]-beta-D-GlcNAc-(1-&gt;3)-beta-D-Gal-(1-&gt;4)-[alpha-L-Fuc-(1-&gt;3)]-beta-D-GlcNAc derivative + GDP + H(+). It carries out the reaction Lc4Cer + GDP-beta-L-fucose = a lactoside III(4)-a-Fuc-Lc4Cer + GDP + H(+). The enzyme catalyses a beta-D-Gal-(1-&gt;3)-beta-D-GlcNAc-(1-&gt;3)-beta-D-Gal-(1-&gt;4)-beta-D-Glc-(1&lt;-&gt;1')-Cer(d18:1(4E)) + GDP-beta-L-fucose = a III(4)-a-Fuc-Lc4Cer(d18:1(4E)) + GDP + H(+). It catalyses the reaction N-acetyl-alpha-neuraminosyl-(2-&gt;3)-beta-D-galactosyl-(1-&gt;3)-[N-acetyl-alpha-neuraminosyl-(2-&gt;6)]-N-acetyl-beta-D-glucosaminyl-(1-&gt;3)-beta-D-galactosyl-(1-&gt;4)-beta-D-glucosyl-(1&lt;-&gt;1')-N-acyl-sphing-4-enine + GDP-beta-L-fucose = N-acetyl-alpha-neuraminosyl-(2-&gt;3)-beta-D-galactosyl-(1-&gt;3)-alpha-L-fucosyl-(1-&gt;4)-[N-acetyl-alpha-neuraminosyl-(2-&gt;6)-N-acetyl-beta-D-glucosaminyl-(1-&gt;3)]-beta-D-galactosyl-(1-&gt;4)-beta-D-glucosyl-(1&lt;-&gt;1')-N-acyl-sphing-4-enine + GDP + H(+). The catalysed reaction is N-acetyl-alpha-neuraminosyl-(2-&gt;3)-beta-D-galactosyl-(1-&gt;3)-N-acetyl-beta-D-glucosaminyl-(1-&gt;3)-beta-D-galactosyl-(1-&gt;4)-beta-D-glucosyl-(1&lt;-&gt;1')-N-acyl-sphing-4-enine + GDP-beta-L-fucose = N-acetyl-alpha-neuraminosyl-(2-&gt;3)-beta-D-galactosyl-(1-&gt;3)-alpha-L-fucosyl-(1-&gt;4)-[N-acetyl-beta-D-glucosaminyl-(1-&gt;3)]-beta-D-galactosyl-(1-&gt;4)-beta-D-glucosyl-(1&lt;-&gt;1')-N-acyl-sphing-4-enine + GDP + H(+). It carries out the reaction beta-D-galactosyl-(1-&gt;3)-N-acetyl-D-glucosamine + GDP-beta-L-fucose = beta-D-galactosyl-(1-&gt;3)-[alpha-L-fucosyl-(1-&gt;4)]-N-acetyl-D-glucosamine + GDP + H(+). The enzyme catalyses alpha-L-Fuc-(1-&gt;2)-beta-D-Gal-(1-&gt;3)-D-GlcNAc + GDP-beta-L-fucose = alpha-L-Fuc-(1-&gt;2)-beta-D-Gal-(1-&gt;3)-[alpha-L-Fuc-(1-&gt;4)]-D-GlcNAc + GDP + H(+). It catalyses the reaction alpha-L-Fuc-(1-&gt;2)-beta-D-Gal-(1-&gt;4)-D-GlcNAc + GDP-beta-L-fucose = alpha-L-Fuc-(1-&gt;2)-beta-D-Gal-(1-&gt;4)-[alpha-L-Fuc-(1-&gt;3)]-D-GlcNAc + GDP + H(+). The catalysed reaction is beta-D-galactosyl-(1-&gt;4)-N-acetyl-D-glucosamine + GDP-beta-L-fucose = beta-D-galactosyl-(1-&gt;4)-[alpha-L-fucosyl-(1-&gt;3)]-N-acetyl-D-glucosamine + GDP + H(+). It carries out the reaction lactose + GDP-beta-L-fucose = beta-D-galactosyl-(1-&gt;4)-[alpha-L-fucosyl-(1-&gt;3)]-D-glucose + GDP + H(+). The enzyme catalyses an alpha-Neu5Ac-(2-&gt;3)-beta-D-Gal-(1-&gt;3)-D-GlcNAc derivative + GDP-beta-L-fucose = an alpha-Neu5Ac-(2-&gt;3)-beta-D-Gal-(1-&gt;3)-[alpha-L-Fuc-(1-&gt;4)]-beta-D-GlcNAc derivative + GDP + H(+). It functions in the pathway protein modification; protein glycosylation. Functionally, catalyzes the transfer of L-fucose, from a guanosine diphosphate-beta-L-fucose, to both the subterminal N-acetyl glucosamine (GlcNAc) of type 1 chain (beta-D-Gal-(1-&gt;3)-beta-D-GlcNAc) glycolipids and oligosaccharides via an alpha(1,4) linkage, and the subterminal glucose (Glc) or GlcNAc of type 2 chain (beta-D-Gal-(1-&gt;4)-beta-D-GlcNAc) oligosaccharides via an alpha(1,3) linkage, independently of the presence of terminal alpha-L-fucosyl-(1,2) moieties on the terminal galactose of these acceptors and participates in the blood groups Lewis determination and expression of Lewis a (Le(a)), lewis b (Le(b)), Lewis x/SSEA-1 (Le(x)) and lewis y (Le(y)) antigens. Also catalyzes the transfer of L-fucose to subterminal GlcNAc of sialyl- and disialyl-lactotetraosylceramide to produce sialyl Lewis a (sLe(a)) and disialyl Lewis a via an alpha(1,4) linkage and therefore may regulate cell surface sialyl Lewis a expression and consequently regulates adhesive properties to E-selectin, cell proliferation and migration. Catalyzes the transfer of an L-fucose to 3'-sialyl-N-acetyllactosamine by an alpha(1,3) linkage, which allows the formation of sialyl-Lewis x structure and therefore may regulate the sialyl-Lewis x surface antigen expression and consequently adhesive properties to E-selectin. Prefers type 1 chain over type 2 acceptors. Type 1 tetrasaccharide is a better acceptor than type 1 disaccharide suggesting that a beta anomeric configuration of GlcNAc in the substrate is preferred. Lewis-positive (Le(+)) individuals have an active enzyme while Lewis-negative (Le(-)) individuals have an inactive enzyme. This Pan troglodytes (Chimpanzee) protein is 3-galactosyl-N-acetylglucosaminide 4-alpha-L-fucosyltransferase FUT3.